Reading from the N-terminus, the 779-residue chain is Molybdenum cofactor sulfurase (779 aa).

The residue at position 247 (K247) is an N6-(pyridoxal phosphate)lysine. C409 is an active-site residue. One can recognise an MOSC domain in the interval 624–779 (SQSLGLEGVR…LTCGDVIVVS (156 aa)). Position 732 is a phosphoserine (S732).

Belongs to the class-V pyridoxal-phosphate-dependent aminotransferase family. MOCOS subfamily. Requires pyridoxal 5'-phosphate as cofactor.

It carries out the reaction Mo-molybdopterin + L-cysteine + AH2 = thio-Mo-molybdopterin + L-alanine + A + H2O. The protein operates within cofactor biosynthesis; molybdopterin biosynthesis. Functionally, sulfurates the molybdenum cofactor. Sulfation of molybdenum is essential for xanthine dehydrogenase (XDH) and aldehyde oxidase (ADO) enzymes in which molybdenum cofactor is liganded by 1 oxygen and 1 sulfur atom in active form. This Drosophila mojavensis (Fruit fly) protein is Molybdenum cofactor sulfurase.